Consider the following 369-residue polypeptide: Tetraacyldisaccharide 4'-kinase (369 aa).

52-59 (TVGGTGKT) lines the ATP pocket.

The protein belongs to the LpxK family.

It catalyses the reaction a lipid A disaccharide + ATP = a lipid IVA + ADP + H(+). Its pathway is glycolipid biosynthesis; lipid IV(A) biosynthesis; lipid IV(A) from (3R)-3-hydroxytetradecanoyl-[acyl-carrier-protein] and UDP-N-acetyl-alpha-D-glucosamine: step 6/6. Functionally, transfers the gamma-phosphate of ATP to the 4'-position of a tetraacyldisaccharide 1-phosphate intermediate (termed DS-1-P) to form tetraacyldisaccharide 1,4'-bis-phosphate (lipid IVA). The polypeptide is Tetraacyldisaccharide 4'-kinase (Parabacteroides distasonis (strain ATCC 8503 / DSM 20701 / CIP 104284 / JCM 5825 / NCTC 11152)).